Reading from the N-terminus, the 247-residue chain is Phosphate import ATP-binding protein PstB (247 aa).

The ABC transporter domain maps to 2–242; it reads CRDVNVYYGE…PRHPLTEDYI (241 aa). ATP is bound at residue 32 to 39; the sequence is GPSGCGKS.

This sequence belongs to the ABC transporter superfamily. Phosphate importer (TC 3.A.1.7) family. As to quaternary structure, the complex is composed of two ATP-binding proteins (PstB), two transmembrane proteins (PstC and PstA) and a solute-binding protein (PstS).

It is found in the cell inner membrane. It catalyses the reaction phosphate(out) + ATP + H2O = ADP + 2 phosphate(in) + H(+). Its function is as follows. Part of the ABC transporter complex PstSACB involved in phosphate import. Responsible for energy coupling to the transport system. The sequence is that of Phosphate import ATP-binding protein PstB from Methylococcus capsulatus (strain ATCC 33009 / NCIMB 11132 / Bath).